We begin with the raw amino-acid sequence, 459 residues long: MVAARARRRKRASVTQLYSTCKAAGTCPPDVIPKVKGTTLADKILQWSGLGIFLGGLGIGTGSGTGGRTGYIPLGGGGRPGVVDIAPARPPIIIEPVAPTEPSIVNLVEDSSIINSGSTIPTFTGTDGFEITSSSTTTPAVLDITPSAGTVHVTSTNIENPLYIEPPFIEAPQSGEVSGHIFTSTPTSGTHGYEEIPMEVFASNVTTGKEPISSTPTPGVRRIAAPRLYSRAFSQVKVTNPDFISKPSTFVTFDNPAFEPADTSLSFEEPTDVAPDPDFLDIIKLHRPALTSRRGTVRFSRLGQKATIRTRSGKQIGARGHYYHDISSIAPAEELEMQPLLSPSTNNYSYDIYADLNEAETGFMQPTQTTPMLRSPFSPLSTQLPSLSSSVSSSYANVTIPFSTTYNVPIHTGPDVVLPTSPTVWPFIPHTSIDTQHAIVIQGGDYYFVAVYIFVTQTP.

The Nuclear localization signal motif lies at 1-12 (MVAARARRRKRA). Cys21 and Cys27 form a disulfide bridge. The short motif at 454-458 (FVTQT) is the Nuclear localization signal element.

This sequence belongs to the papillomaviridae L2 protein family. Interacts with major capsid protein L1. Interacts with E2; this interaction inhibits E2 transcriptional activity but not the DNA replication function E2. Interacts with host GADD45GIP1. Interacts with host HSPA8; this interaction is required for L2 nuclear translocation. Interacts with host importins KPNB2 and KPNB3. Forms a complex with importin alpha2-beta1 heterodimers via interaction with the importin alpha2 adapter. Interacts with host DYNLT1; this interaction is essential for virus intracellular transport during entry. Interacts (via C-terminus) with host retromer subunits VPS35 and VPS29. Highly phosphorylated.

The protein localises to the virion. It localises to the host nucleus. It is found in the host early endosome. The protein resides in the host Golgi apparatus. In terms of biological role, minor protein of the capsid that localizes along the inner surface of the virion, within the central cavities beneath the L1 pentamers. Plays a role in capsid stabilization through interaction with the major capsid protein L1. Once the virion enters the host cell, L2 escorts the genomic DNA into the nucleus by promoting escape from the endosomal compartments and traffic through the host Golgi network. Mechanistically, the C-terminus of L2 possesses a cell-penetrating peptide that protudes from the host endosome, interacts with host cytoplasmic retromer cargo and thereby mediates the capsid delivery to the host trans-Golgi network. Plays a role through its interaction with host dynein in the intracellular microtubule-dependent transport of viral capsid toward the nucleus. Mediates the viral genome import into the nucleus through binding to host importins. Once within the nucleus, L2 localizes viral genomes to host PML bodies in order to activate early gene expression for establishment of infection. Later on, promotes late gene expression by interacting with the viral E2 protein and by inhibiting its transcriptional activation functions. During virion assembly, encapsidates the genome by direct interaction with the viral DNA. This chain is Minor capsid protein L2, found in Human papillomavirus 82.